Here is a 207-residue protein sequence, read N- to C-terminus: LexA repressor (207 aa).

The H-T-H motif DNA-binding region spans 28-48 (VREIGEAVGLASSSTVHGHLS). Residues S129 and K167 each act as for autocatalytic cleavage activity in the active site.

This sequence belongs to the peptidase S24 family. Homodimer.

It carries out the reaction Hydrolysis of Ala-|-Gly bond in repressor LexA.. In terms of biological role, represses a number of genes involved in the response to DNA damage (SOS response), including recA and lexA. In the presence of single-stranded DNA, RecA interacts with LexA causing an autocatalytic cleavage which disrupts the DNA-binding part of LexA, leading to derepression of the SOS regulon and eventually DNA repair. This Halalkalibacterium halodurans (strain ATCC BAA-125 / DSM 18197 / FERM 7344 / JCM 9153 / C-125) (Bacillus halodurans) protein is LexA repressor.